The following is a 138-amino-acid chain: Altered inheritance of mitochondria protein 11 (138 aa).

Helical transmembrane passes span Ala17–Ser34 and Leu67–Leu89.

The protein belongs to the AIM11 family.

Its subcellular location is the membrane. This is Altered inheritance of mitochondria protein 11 (AIM11) from Saccharomyces cerevisiae (strain JAY291) (Baker's yeast).